The following is a 918-amino-acid chain: Isoleucine--tRNA ligase (918 aa).

The short motif at 57–67 is the 'HIGH' region element; sequence PYANGHIHIGT. E552 lines the L-isoleucyl-5'-AMP pocket. A 'KMSKS' region motif is present at residues 593 to 597; it reads KMSKS. K596 serves as a coordination point for ATP. Residues C886, C889, C906, and C909 each contribute to the Zn(2+) site.

It belongs to the class-I aminoacyl-tRNA synthetase family. IleS type 1 subfamily. Monomer. Zn(2+) serves as cofactor.

The protein localises to the cytoplasm. The catalysed reaction is tRNA(Ile) + L-isoleucine + ATP = L-isoleucyl-tRNA(Ile) + AMP + diphosphate. Catalyzes the attachment of isoleucine to tRNA(Ile). As IleRS can inadvertently accommodate and process structurally similar amino acids such as valine, to avoid such errors it has two additional distinct tRNA(Ile)-dependent editing activities. One activity is designated as 'pretransfer' editing and involves the hydrolysis of activated Val-AMP. The other activity is designated 'posttransfer' editing and involves deacylation of mischarged Val-tRNA(Ile). This Thermotoga neapolitana (strain ATCC 49049 / DSM 4359 / NBRC 107923 / NS-E) protein is Isoleucine--tRNA ligase.